The primary structure comprises 123 residues: Cytochrome b-c1 complex subunit 7 (123 aa).

The protein belongs to the UQCRB/QCR7 family. In terms of assembly, component of the ubiquinol-cytochrome c oxidoreductase (cytochrome b-c1 complex, complex III, CIII), a multisubunit enzyme composed of 3 respiratory subunits cytochrome b, cytochrome c1 and Rieske protein, 2 core protein subunits, and additional low-molecular weight protein subunits. The complex exists as an obligatory dimer and forms supercomplexes (SCs) in the inner mitochondrial membrane with cytochrome c oxidase (complex IV, CIV). Post-translationally, the N-terminus is blocked.

Its subcellular location is the mitochondrion inner membrane. Component of the ubiquinol-cytochrome c oxidoreductase, a multisubunit transmembrane complex that is part of the mitochondrial electron transport chain which drives oxidative phosphorylation. The respiratory chain contains 3 multisubunit complexes succinate dehydrogenase (complex II, CII), ubiquinol-cytochrome c oxidoreductase (cytochrome b-c1 complex, complex III, CIII) and cytochrome c oxidase (complex IV, CIV), that cooperate to transfer electrons derived from NADH and succinate to molecular oxygen, creating an electrochemical gradient over the inner membrane that drives transmembrane transport and the ATP synthase. The cytochrome b-c1 complex catalyzes electron transfer from ubiquinol to cytochrome c, linking this redox reaction to translocation of protons across the mitochondrial inner membrane, with protons being carried across the membrane as hydrogens on the quinol. In the process called Q cycle, 2 protons are consumed from the matrix, 4 protons are released into the intermembrane space and 2 electrons are passed to cytochrome c. This Solanum tuberosum (Potato) protein is Cytochrome b-c1 complex subunit 7.